A 218-amino-acid polypeptide reads, in one-letter code: Outer-membrane lipoprotein LolB (218 aa).

The N-terminal stretch at 1–20 (MSQVIRTLALTGLALAGLSG) is a signal peptide. A lipid anchor (N-palmitoyl cysteine) is attached at Cys21. Cys21 is lipidated: S-diacylglycerol cysteine.

Belongs to the LolB family. In terms of assembly, monomer.

It localises to the cell outer membrane. Plays a critical role in the incorporation of lipoproteins in the outer membrane after they are released by the LolA protein. The protein is Outer-membrane lipoprotein LolB of Xanthomonas campestris pv. campestris (strain B100).